Consider the following 446-residue polypeptide: Phosphoglucosamine mutase (446 aa).

The Phosphoserine intermediate role is filled by serine 102. Mg(2+)-binding residues include serine 102, aspartate 241, aspartate 243, and aspartate 245. Serine 102 is modified (phosphoserine).

This sequence belongs to the phosphohexose mutase family. Mg(2+) serves as cofactor. Activated by phosphorylation.

The catalysed reaction is alpha-D-glucosamine 1-phosphate = D-glucosamine 6-phosphate. Its function is as follows. Catalyzes the conversion of glucosamine-6-phosphate to glucosamine-1-phosphate. In Xylella fastidiosa (strain M12), this protein is Phosphoglucosamine mutase.